Reading from the N-terminus, the 460-residue chain is A-type ATP synthase subunit B (460 aa).

The protein belongs to the ATPase alpha/beta chains family. In terms of assembly, has multiple subunits with at least A(3), B(3), C, D, E, F, H, I and proteolipid K(x).

The protein localises to the cell membrane. In terms of biological role, component of the A-type ATP synthase that produces ATP from ADP in the presence of a proton gradient across the membrane. The B chain is a regulatory subunit. The polypeptide is A-type ATP synthase subunit B (Thermoplasma acidophilum (strain ATCC 25905 / DSM 1728 / JCM 9062 / NBRC 15155 / AMRC-C165)).